Consider the following 413-residue polypeptide: Serine hydroxymethyltransferase (413 aa).

(6S)-5,6,7,8-tetrahydrofolate is bound by residues Leu117 and 121–123 (GHL). At Lys226 the chain carries N6-(pyridoxal phosphate)lysine. (6S)-5,6,7,8-tetrahydrofolate is bound by residues Glu239 and 349-351 (SPF).

This sequence belongs to the SHMT family. In terms of assembly, homodimer. Pyridoxal 5'-phosphate serves as cofactor.

Its subcellular location is the cytoplasm. The enzyme catalyses (6R)-5,10-methylene-5,6,7,8-tetrahydrofolate + glycine + H2O = (6S)-5,6,7,8-tetrahydrofolate + L-serine. It functions in the pathway one-carbon metabolism; tetrahydrofolate interconversion. It participates in amino-acid biosynthesis; glycine biosynthesis; glycine from L-serine: step 1/1. Its function is as follows. Catalyzes the reversible interconversion of serine and glycine with tetrahydrofolate (THF) serving as the one-carbon carrier. This reaction serves as the major source of one-carbon groups required for the biosynthesis of purines, thymidylate, methionine, and other important biomolecules. Also exhibits THF-independent aldolase activity toward beta-hydroxyamino acids, producing glycine and aldehydes, via a retro-aldol mechanism. The sequence is that of Serine hydroxymethyltransferase from Bacillus cereus (strain AH820).